Reading from the N-terminus, the 55-residue chain is Cytochrome b-c1 complex subunit 9 (55 aa).

At 1 to 15 (MKVIYNTLFKRTSTY) the chain is on the mitochondrial matrix side. The chain crosses the membrane as a helical span at residues 16-41 (AVAIIASAFFFERALDVTSVAIFEGI). Residues 42 to 55 (NKGKLWKDIKGKYE) are Chloroplast intermembrane-facing.

The protein belongs to the UQCR10/QCR9 family. Component of the ubiquinol-cytochrome c oxidoreductase (cytochrome b-c1 complex, complex III, CIII), a multisubunit enzyme composed of 3 respiratory subunits cytochrome b, cytochrome c1 and Rieske protein, 2 core protein subunits, and additional low-molecular weight protein subunits. The complex exists as an obligatory dimer and forms supercomplexes (SCs) in the inner mitochondrial membrane with cytochrome c oxidase (complex IV, CIV).

The protein localises to the mitochondrion inner membrane. Functionally, component of the ubiquinol-cytochrome c oxidoreductase, a multisubunit transmembrane complex that is part of the mitochondrial electron transport chain which drives oxidative phosphorylation. The respiratory chain contains 3 multisubunit complexes succinate dehydrogenase (complex II, CII), ubiquinol-cytochrome c oxidoreductase (cytochrome b-c1 complex, complex III, CIII) and cytochrome c oxidase (complex IV, CIV), that cooperate to transfer electrons derived from NADH and succinate to molecular oxygen, creating an electrochemical gradient over the inner membrane that drives transmembrane transport and the ATP synthase. The cytochrome b-c1 complex catalyzes electron transfer from ubiquinol to cytochrome c, linking this redox reaction to translocation of protons across the mitochondrial inner membrane, with protons being carried across the membrane as hydrogens on the quinol. In the process called Q cycle, 2 protons are consumed from the matrix, 4 protons are released into the intermembrane space and 2 electrons are passed to cytochrome c. The protein is Cytochrome b-c1 complex subunit 9 (ox) of Drosophila melanogaster (Fruit fly).